Consider the following 273-residue polypeptide: Putative phosphoenolpyruvate synthase regulatory protein (273 aa).

153 to 160 (GVSRSGKT) serves as a coordination point for ADP.

This sequence belongs to the pyruvate, phosphate/water dikinase regulatory protein family. PSRP subfamily.

It carries out the reaction [pyruvate, water dikinase] + ADP = [pyruvate, water dikinase]-phosphate + AMP + H(+). It catalyses the reaction [pyruvate, water dikinase]-phosphate + phosphate + H(+) = [pyruvate, water dikinase] + diphosphate. Its function is as follows. Bifunctional serine/threonine kinase and phosphorylase involved in the regulation of the phosphoenolpyruvate synthase (PEPS) by catalyzing its phosphorylation/dephosphorylation. The chain is Putative phosphoenolpyruvate synthase regulatory protein from Albidiferax ferrireducens (strain ATCC BAA-621 / DSM 15236 / T118) (Rhodoferax ferrireducens).